A 664-amino-acid polypeptide reads, in one-letter code: uncharacterized protein (664 aa).

This is an uncharacterized protein from Mycoplasma pneumoniae (strain ATCC 29342 / M129 / Subtype 1) (Mycoplasmoides pneumoniae).